The primary structure comprises 410 residues: BRCA1-A complex subunit Abraxas 1 (410 aa).

Positions 7-160 constitute an MPN domain; it reads TAVLSGFVLG…HALYKPQKGL (154 aa). S48 carries the post-translational modification Phosphoserine. The stretch at 208–261 forms a coiled coil; the sequence is SLKEVQKINEMYTSLQDELKSICEKVEHSERAVEKLLNDVNRLKGEIKKRKQAQ. A disordered region spans residues 354-410; sequence DGWQFKKSRLGGIQNRPSKTDTNSSNQEQASTVSSPETDEEIERMKGSGEYPQSPTF. Polar residues predominate over residues 368 to 389; that stretch reads NRPSKTDTNSSNQEQASTVSSP. A phosphoserine mark is found at S387 and S388. Position 391 is a phosphothreonine (T391). At S407 the chain carries Phosphoserine. The pSXXF motif motif lies at 407–410; it reads SPTF.

This sequence belongs to the FAM175 family. Abraxas subfamily. Component of the ARISC complex, at least composed of UIMC1/RAP80, ABRAXAS1, BRCC3/BRCC36, BABAM2 and BABAM1/NBA1. Component of the BRCA1-A complex, at least composed of the BRCA1, BARD1, UIMC1/RAP80, ABRAXAS1, BRCC3/BRCC36, BABAM2 and BABAM1/NBA1. In the complex, interacts directly with UIMC1/RAP80, BRCC3/BRCC36 and BABAM2. Homodimer. Interacts directly (when phosphorylated at Ser-407) with BRCA1. The phosphorylated homodimer can interact directly with two BRCA1 chains, giving rise to a heterotetramer. Binds polyubiquitin. Post-translationally, phosphorylation of Ser-407 of the pSXXF motif by ATM or ATR constitutes a specific recognition motif for the BRCT domain of BRCA1.

The protein localises to the nucleus. Functionally, involved in DNA damage response and double-strand break (DSB) repair. Component of the BRCA1-A complex, acting as a central scaffold protein that assembles the various components of the complex and mediates the recruitment of BRCA1. The BRCA1-A complex specifically recognizes 'Lys-63'-linked ubiquitinated histones H2A and H2AX at DNA lesion sites, leading to target the BRCA1-BARD1 heterodimer to sites of DNA damage at DSBs. This complex also possesses deubiquitinase activity that specifically removes 'Lys-63'-linked ubiquitin on histones H2A and H2AX. This is BRCA1-A complex subunit Abraxas 1 from Bos taurus (Bovine).